We begin with the raw amino-acid sequence, 527 residues long: (3S)-3-amino-3-(3-chloro-4-hydroxyphenyl)propanoyl-[peptidyl-carrier protein SgcC2] monooxygenase (527 aa).

Residues 1–10 (MPHGAEREAS) are compositionally biased toward basic and acidic residues. Positions 1 to 22 (MPHGAEREASPAEESAGTRPLT) are disordered. FAD contacts are provided by residues 161 to 163 (HAF), 167 to 170 (PVDR), and threonine 202.

Belongs to the FADH(2)-utilizing monooxygenase family. Homotetramer.

The enzyme catalyses (3S)-3-amino-3-(3-chloro-4-hydroxyphenyl)propanoyl-[SgcC2 peptidyl-carrier protein] + FADH2 + O2 = (3S)-3-amino-3-(3-chloro-4,5-dihydroxyphenyl)propanoyl-[SgcC2 peptidyl-carrier protein] + FAD + H2O + H(+). Its pathway is antibiotic biosynthesis. The SgcE6-SgcC hydroxylation activity decreases in the presence of excess FAD. Functionally, oxygenase component of a two-component system involved in the biosynthesis of the enediyne antitumor antibiotic C-1027. Uses FADH(2) supplied by SgcE6 to catalyze the C-5 hydroxylation of (S)-3-chloro-beta-tyrosyl-S-SgcC2. Can also efficiently catalyze the regioselective hydroxylation of other 3-substituted beta-tyrosyl-S-SgcC2 analogs, including the bromo-, iodo-, fluoro-, and methyl-substituted analogs, but does not accept 3-hydroxy-beta-tyrosyl-S-SgcC2 as a substrate. Is only active with SgcC2 (peptidyl carrier protein)-tethered substrates. The polypeptide is (3S)-3-amino-3-(3-chloro-4-hydroxyphenyl)propanoyl-[peptidyl-carrier protein SgcC2] monooxygenase (Streptomyces globisporus).